A 365-amino-acid polypeptide reads, in one-letter code: UPF0718 protein MJ0584 (365 aa).

Transmembrane regions (helical) follow at residues 6 to 26 (MSFI…YLNV), 32 to 52 (LLMA…NFII), 67 to 87 (VAAV…PLFA), 108 to 128 (AINV…IGFL), 130 to 150 (AVFA…IFKS), 174 to 194 (ITFF…PKLF), 201 to 221 (LYDG…ILAV), 245 to 265 (IVFP…AIIP), 282 to 302 (FIAS…VPII), 308 to 328 (LGMG…LSIP), and 344 to 364 (TYLG…GIIL).

This sequence belongs to the UPF0718 family.

It is found in the cell membrane. In Methanocaldococcus jannaschii (strain ATCC 43067 / DSM 2661 / JAL-1 / JCM 10045 / NBRC 100440) (Methanococcus jannaschii), this protein is UPF0718 protein MJ0584.